A 272-amino-acid chain; its full sequence is PHD finger protein ALFIN-LIKE 6 (272 aa).

The span at 1-23 shows a compositional bias: gly residues; the sequence is MEGGGGGGGGGGGGGGGGGGGGA. 2 disordered regions span residues 1-24 and 162-218; these read MEGGGGGGGGGGGGGGGGGGGGAP and QAKE…DNTL. Over residues 168 to 182 the composition is skewed to low complexity; sequence PNSSSKSNKPSSKVQ. A compositionally biased stretch (basic and acidic residues) spans 183 to 200; sequence SKAESRSKSKLSAPKDEE. Over residues 201-214 the composition is skewed to acidic residues; it reads GSGDDEGEEEEDDH. A PHD-type zinc finger spans residues 216–268; that stretch reads NTLCGTCGTNDGKDEFWICCDNCEKWYHGKCVKITPARAEHIKQYKCPDCTNK.

It belongs to the Alfin family.

The protein localises to the nucleus. Functionally, histone-binding component that specifically recognizes H3 tails trimethylated on 'Lys-4' (H3K4me3), which mark transcription start sites of virtually all active genes. The chain is PHD finger protein ALFIN-LIKE 6 from Oryza sativa subsp. indica (Rice).